The chain runs to 360 residues: CLIP domain-containing serine protease B4 (360 aa).

The signal sequence occupies residues 1–24; the sequence is MIGNRVINLLIVATLALAGQTVLA. The Clip domain maps to 30-83; the sequence is DCVNPVGEAGKCVLFRECQPLVDIYNKPVNTPDDTQFLTESRCGLYERKTLVCC. Intrachain disulfides connect cysteine 31–cysteine 82, cysteine 41–cysteine 72, cysteine 47–cysteine 83, and cysteine 138–cysteine 154. One can recognise a Peptidase S1 domain in the interval 108-360; it reads VIGGQPTKID…YVDWIKDNIY (253 aa). Catalysis depends on charge relay system residues histidine 153 and aspartate 213. An N-linked (GlcNAc...) asparagine glycan is attached at asparagine 224. Intrachain disulfides connect cysteine 280–cysteine 297 and cysteine 307–cysteine 336. Serine 311 serves as the catalytic Charge relay system.

This sequence belongs to the peptidase S1 family. CLIP subfamily. Interacts with SRPN2 in the hemolymph of immune-challenged female mosquitoes; the interaction results in CLIPB4 inhibition. In terms of tissue distribution, in females, expressed in fat body, cuticle, thorax and ovaries.

The protein localises to the secreted. In terms of biological role, serine protease which plays a role in the innate immune response against protozoan and bacterial pathogens, such as Plasmodium bergei, Staphylococcus aureus, Micrococcus luteus and Escherichia coli, by activating the melanization cascade. Cleaves and activates CLIPB8. In the resistant strain L3-5, involved in the melanization of killed parasite P.berghei ookinetes which results in their clearance. In the susceptible strain G3, appears to be dispensable for ookinete elimination which occurs by lysis. In Anopheles gambiae (African malaria mosquito), this protein is CLIP domain-containing serine protease B4.